A 628-amino-acid polypeptide reads, in one-letter code: Chaperone protein HtpG (628 aa).

The segment at 1–333 (MTTDTKATET…SADLPLNVSR (333 aa)) is a; substrate-binding. The b stretch occupies residues 334 to 549 (EMIQESPLLA…EHGPDRQFER (216 aa)). A c region spans residues 550–628 (LMNAAGRLDK…RLIARGIAKG (79 aa)).

Belongs to the heat shock protein 90 family. Homodimer.

The protein resides in the cytoplasm. Its function is as follows. Molecular chaperone. Has ATPase activity. The chain is Chaperone protein HtpG from Mesorhizobium japonicum (strain LMG 29417 / CECT 9101 / MAFF 303099) (Mesorhizobium loti (strain MAFF 303099)).